The chain runs to 345 residues: D-alanine--D-alanine ligase (345 aa).

Residues 133-332 (KWLCHARGVK…LPHTKRAKVT (200 aa)) enclose the ATP-grasp domain. Position 160-211 (160-211 (AYPIIVKPSRLGSSIGVSIVKDESKLDYALDSAFEFDNTVIVEPFLEGVKEY)) interacts with ATP. Positions 284, 296, and 298 each coordinate Mg(2+).

The protein belongs to the D-alanine--D-alanine ligase family. It depends on Mg(2+) as a cofactor. Mn(2+) is required as a cofactor.

It is found in the cytoplasm. It catalyses the reaction 2 D-alanine + ATP = D-alanyl-D-alanine + ADP + phosphate + H(+). It participates in cell wall biogenesis; peptidoglycan biosynthesis. Cell wall formation. This is D-alanine--D-alanine ligase from Sulfurimonas denitrificans (strain ATCC 33889 / DSM 1251) (Thiomicrospira denitrificans (strain ATCC 33889 / DSM 1251)).